The sequence spans 127 residues: Flagellar hook-basal body complex protein FliE (127 aa).

The protein belongs to the FliE family.

It localises to the bacterial flagellum basal body. This is Flagellar hook-basal body complex protein FliE from Leptospira interrogans serogroup Icterohaemorrhagiae serovar copenhageni (strain Fiocruz L1-130).